The chain runs to 29 residues: Brevinin-2Tc (29 aa).

Cysteines 23 and 29 form a disulfide.

Belongs to the frog skin active peptide (FSAP) family. Brevinin subfamily. In terms of tissue distribution, expressed by the skin glands.

The protein localises to the secreted. Antibacterial activity against representative Gram-negative and Gram-positive bacteria. This Rana temporaria (European common frog) protein is Brevinin-2Tc.